The sequence spans 351 residues: Apolipoprotein L4 (351 aa).

A signal peptide spans 1-21 (MEGAALLKIFVVCIWVQQNHP).

It belongs to the apolipoprotein L family. As to expression, widely expressed; the highest levels are in spinal cord, placenta, adrenal gland; also detected in spleen, bone marrow, uterus, trachea, mammary gland and testis; levels are low in brain, heart and pancreas.

The protein resides in the secreted. May play a role in lipid exchange and transport throughout the body. May participate in reverse cholesterol transport from peripheral cells to the liver. The protein is Apolipoprotein L4 (APOL4) of Homo sapiens (Human).